Here is a 162-residue protein sequence, read N- to C-terminus: MYVELVDETGQVPSEIIEQTKEVLAFAAKKLDLKESTEMSVTFVDNARSHELNLQYRETDRPTDVISLEYKPDESEFFFDEDMELPEELLEEMDPFIGELFISIDKAAEQAADYGHSIEREYGWLAVHGFLHINGYDHYMPEEESEMFALQEEILTAYGLTR.

3 residues coordinate Zn(2+): His-128, His-132, and His-138.

This sequence belongs to the endoribonuclease YbeY family. Zn(2+) serves as cofactor.

It localises to the cytoplasm. Its function is as follows. Single strand-specific metallo-endoribonuclease involved in late-stage 70S ribosome quality control and in maturation of the 3' terminus of the 16S rRNA. This chain is Endoribonuclease YbeY, found in Lactococcus lactis subsp. cremoris (strain SK11).